Consider the following 40-residue polypeptide: Photosystem II reaction center protein J (40 aa).

Residues isoleucine 8–phenylalanine 28 form a helical membrane-spanning segment.

The protein belongs to the PsbJ family. PSII is composed of 1 copy each of membrane proteins PsbA, PsbB, PsbC, PsbD, PsbE, PsbF, PsbH, PsbI, PsbJ, PsbK, PsbL, PsbM, PsbT, PsbX, PsbY, PsbZ, Psb30/Ycf12, at least 3 peripheral proteins of the oxygen-evolving complex and a large number of cofactors. It forms dimeric complexes.

Its subcellular location is the plastid. The protein resides in the chloroplast thylakoid membrane. In terms of biological role, one of the components of the core complex of photosystem II (PSII). PSII is a light-driven water:plastoquinone oxidoreductase that uses light energy to abstract electrons from H(2)O, generating O(2) and a proton gradient subsequently used for ATP formation. It consists of a core antenna complex that captures photons, and an electron transfer chain that converts photonic excitation into a charge separation. This chain is Photosystem II reaction center protein J, found in Nasturtium officinale (Watercress).